The sequence spans 324 residues: Elongation factor P--(R)-beta-lysine ligase (324 aa).

A substrate-binding site is contributed by 75–77 (SPE). Residues 99–101 (RNE) and Asn-108 each bind ATP. Tyr-117 contacts substrate. An ATP-binding site is contributed by 243-244 (EL). Glu-250 lines the substrate pocket. Gly-299 provides a ligand contact to ATP.

It belongs to the class-II aminoacyl-tRNA synthetase family. EpmA subfamily. As to quaternary structure, homodimer.

The catalysed reaction is D-beta-lysine + L-lysyl-[protein] + ATP = N(6)-((3R)-3,6-diaminohexanoyl)-L-lysyl-[protein] + AMP + diphosphate + H(+). With EpmB is involved in the beta-lysylation step of the post-translational modification of translation elongation factor P (EF-P). Catalyzes the ATP-dependent activation of (R)-beta-lysine produced by EpmB, forming a lysyl-adenylate, from which the beta-lysyl moiety is then transferred to the epsilon-amino group of a conserved specific lysine residue in EF-P. This Vibrio cholerae serotype O1 (strain ATCC 39315 / El Tor Inaba N16961) protein is Elongation factor P--(R)-beta-lysine ligase.